The primary structure comprises 158 residues: Cyclic pyranopterin monophosphate synthase (158 aa).

Residues 74 to 76 (MCH) and 112 to 113 (ME) each bind substrate. The active site involves Asp127.

Belongs to the MoaC family. Homohexamer; trimer of dimers.

The enzyme catalyses (8S)-3',8-cyclo-7,8-dihydroguanosine 5'-triphosphate = cyclic pyranopterin phosphate + diphosphate. It participates in cofactor biosynthesis; molybdopterin biosynthesis. Functionally, catalyzes the conversion of (8S)-3',8-cyclo-7,8-dihydroguanosine 5'-triphosphate to cyclic pyranopterin monophosphate (cPMP). In Helicobacter pylori (strain ATCC 700392 / 26695) (Campylobacter pylori), this protein is Cyclic pyranopterin monophosphate synthase.